Here is a 444-residue protein sequence, read N- to C-terminus: Probable glycine dehydrogenase (decarboxylating) subunit 1 (444 aa).

Belongs to the GcvP family. N-terminal subunit subfamily. The glycine cleavage system is composed of four proteins: P, T, L and H. In this organism, the P 'protein' is a heterodimer of two subunits.

The enzyme catalyses N(6)-[(R)-lipoyl]-L-lysyl-[glycine-cleavage complex H protein] + glycine + H(+) = N(6)-[(R)-S(8)-aminomethyldihydrolipoyl]-L-lysyl-[glycine-cleavage complex H protein] + CO2. Functionally, the glycine cleavage system catalyzes the degradation of glycine. The P protein binds the alpha-amino group of glycine through its pyridoxal phosphate cofactor; CO(2) is released and the remaining methylamine moiety is then transferred to the lipoamide cofactor of the H protein. This chain is Probable glycine dehydrogenase (decarboxylating) subunit 1, found in Chlorobium phaeobacteroides (strain DSM 266 / SMG 266 / 2430).